The sequence spans 154 residues: Ribosome maturation factor RimP (154 aa).

Belongs to the RimP family.

Its subcellular location is the cytoplasm. In terms of biological role, required for maturation of 30S ribosomal subunits. The polypeptide is Ribosome maturation factor RimP (Ruthia magnifica subsp. Calyptogena magnifica).